A 309-amino-acid polypeptide reads, in one-letter code: HPr kinase/phosphorylase (309 aa).

Active-site residues include histidine 144 and lysine 165. 159–166 (GDSGLGKS) contacts ATP. Serine 166 provides a ligand contact to Mg(2+). Residue aspartate 183 is the Proton acceptor; for phosphorylation activity. Proton donor; for dephosphorylation activity of the active site. The interval 206 to 215 (IEVRGLGLID) is important for the catalytic mechanism of both phosphorylation and dephosphorylation. Glutamate 207 is a binding site for Mg(2+). Residue arginine 249 is part of the active site. The important for the catalytic mechanism of dephosphorylation stretch occupies residues 270–275 (PIRQGR).

It belongs to the HPrK/P family. Homohexamer. The cofactor is Mg(2+).

It carries out the reaction [HPr protein]-L-serine + ATP = [HPr protein]-O-phospho-L-serine + ADP + H(+). The enzyme catalyses [HPr protein]-O-phospho-L-serine + phosphate + H(+) = [HPr protein]-L-serine + diphosphate. In terms of biological role, catalyzes the ATP- as well as the pyrophosphate-dependent phosphorylation of a specific serine residue in HPr, a phosphocarrier protein of the phosphoenolpyruvate-dependent sugar phosphotransferase system (PTS). HprK/P also catalyzes the pyrophosphate-producing, inorganic phosphate-dependent dephosphorylation (phosphorolysis) of seryl-phosphorylated HPr (P-Ser-HPr). The polypeptide is HPr kinase/phosphorylase (hprK) (Mycoplasmopsis pulmonis (strain UAB CTIP) (Mycoplasma pulmonis)).